The primary structure comprises 1325 residues: uncharacterized protein (1325 aa).

Residues 1-27 form the signal peptide; it reads MHTFTRKVKWPFMFTAIGLTFGIVAVA. Cys28 carries the N-palmitoyl cysteine lipid modification. Cys28 carries the S-diacylglycerol cysteine lipid modification. Disordered regions lie at residues 379 to 402 and 430 to 464; these read RAAS…GTTQ and NTNA…TGNS. Over residues 436–448 the composition is skewed to gly residues; sequence TGGGGSGGGGGTS. Residues 449-464 are compositionally biased toward low complexity; that stretch reads TGSSTGSSTETTTGNS.

It belongs to the MG307/MG309/MG338 family.

The protein resides in the cell membrane. This is an uncharacterized protein from Mycoplasma pneumoniae (strain ATCC 29342 / M129 / Subtype 1) (Mycoplasmoides pneumoniae).